Consider the following 280-residue polypeptide: UPF0494 membrane protein SPAC212.01c (280 aa).

Transmembrane regions (helical) follow at residues 107-127, 144-164, 178-198, and 199-219; these read WPLL…KFEV, IWVP…SLIF, VIIA…GMII, and AALG…LYFG.

The protein belongs to the UPF0494 family.

It localises to the membrane. The sequence is that of UPF0494 membrane protein SPAC212.01c from Schizosaccharomyces pombe (strain 972 / ATCC 24843) (Fission yeast).